Consider the following 655-residue polypeptide: MAAGVAAWLPFARAAAIGWMPVANCPMPLAPADKNKRQDELIVLNVSGRRFQTWRTTLERYPDTLLGSTEKEFFFNEDTKEYFFDRDPEVFRCVLNFYRTGKLHYPRYECISAYDDELAFYGILPEIIGDCCYEEYKDRKRENAERLMDDNESENNQESMPSLSFRQTMWRAFENPHTSTLALVFYYVTGFFIAVSVITNVVETVPCGTVPGSKELPCGERYSVAFFCLDTACVMIFTVEYLLRLFAAPSRYRFIRSVMSIIDVVAIMPYYIGLVMTNNEDVSGAFVTLRVFRVFRIFKFSRHSQGLRILGYTLKSCASELGFLLFSLTMAIIIFATVMFYAEKGSSASKFTSIPASFWYTIVTMTTLGYGDMVPKTIAGKIFGSICSLSGVLVIALPVPVIVSNFSRIYHQNQRADKRRAQKKARLARIRVAKTGSSNAYLHSKRNGLLNEALELTGTPEEEHMGKTTSLIESQHHHLLHCLEKTTGLSYLVDDPLLSVRTSTIKNHEFIDEQMFEQNCMESSMQNYPSTRSPSLSSHSGLTTTCCSRRSKKTTHLPNSNLPATRLRSMQELSTIHIQGSEQPSLTTSRSSLNLKADDGLRPNCKTSQITTAIISIPTPPALTPEGESRPPPASPGPNTNIPSITSNVVKVSVL.

The Cytoplasmic portion of the chain corresponds to 1 to 182 (MAAGVAAWLP…FENPHTSTLA (182 aa)). Interaction with KCNIP1 stretches follow at residues 6-21 (AAWLPFARAAAIGWMP) and 70-78 (EKEFFFNED). 4 residues coordinate Zn(2+): histidine 104, cysteine 110, cysteine 131, and cysteine 132. The residue at position 153 (serine 153) is a Phosphoserine. The chain crosses the membrane as a helical span at residues 183-204 (LVFYYVTGFFIAVSVITNVVET). The Extracellular segment spans residues 205–223 (VPCGTVPGSKELPCGERYS). Residues 224–246 (VAFFCLDTACVMIFTVEYLLRLF) traverse the membrane as a helical segment. The Cytoplasmic segment spans residues 247-253 (AAPSRYR). Residues 254-277 (FIRSVMSIIDVVAIMPYYIGLVMT) form a helical membrane-spanning segment. Over 278-283 (NNEDVS) the chain is Extracellular. A helical; Voltage-sensor transmembrane segment spans residues 284–306 (GAFVTLRVFRVFRIFKFSRHSQG). Residues 307–318 (LRILGYTLKSCA) are Cytoplasmic-facing. A helical membrane pass occupies residues 319–343 (SELGFLLFSLTMAIIIFATVMFYAE). Residues 344–352 (KGSSASKFT) are Extracellular-facing. The helical intramembrane region spans 353–366 (SIPASFWYTIVTMT). The K(+) site is built by threonine 367, leucine 368, glycine 369, and tyrosine 370. Residues 367-372 (TLGYGD) carry the Selectivity filter motif. The stretch at 367–374 (TLGYGDMV) is an intramembrane region. The helical transmembrane segment at 378–400 (IAGKIFGSICSLSGVLVIALPVP) threads the bilayer. The Cytoplasmic segment spans residues 401-655 (VIVSNFSRIY…TSNVVKVSVL (255 aa)). Threonine 459 carries the phosphothreonine modification. Residues 470–487 (SLIESQHHHLLHCLEKTT) form an interaction with KCNIP1 and KCNIP2 region. Residues 474–489 (SQHHHLLHCLEKTTGL) form a mediates dendritic targeting region. Positions 523-565 (SSMQNYPSTRSPSLSSHSGLTTTCCSRRSKKTTHLPNSNLPAT) are disordered. Residues 529–548 (PSTRSPSLSSHSGLTTTCCS) are compositionally biased toward low complexity. Serine 569 is subject to Phosphoserine; by CaMK2D. Serine 585 bears the Phosphoserine mark. The disordered stretch occupies residues 616–647 (SIPTPPALTPEGESRPPPASPGPNTNIPSITS). A compositionally biased stretch (polar residues) spans 637-647 (GPNTNIPSITS).

It belongs to the potassium channel family. D (Shal) (TC 1.A.1.2) subfamily. Kv4.3/KCND3 sub-subfamily. In terms of assembly, homotetramer. Heterotetramer with KCND2. Associates with the regulatory subunits KCNIP3 and KCNIP4. Interacts with KCNE1, KCNE2, SCN1B and KCNAB1 and DLG1. Component of heteromultimeric potassium channels. Identified in potassium channel complexes containing KCND1, KCND2, KCND3, KCNIP1, KCNIP2, KCNIP3, KCNIP4, DPP6 and DPP10. Interacts with KCNIP1; each KCNIP1 monomer interacts with two adjacent KCND3 subunits, through both the N-terminal inactivation ball of a KCND3 subunit and a C-terminal helix from the adjacent KCND3 subunit, clamping them together; this interaction stabilizes the tetrameric form and modulates the channel gating kinetics namely channel activation and inactivation kinetics and rate of recovery from inactivation. Interacts with DPP6; this interaction modulates the channel gating kinetics namely channel activation and inactivation kinetics and rate of recovery from inactivation. Interacts with KCNIP2; each KCNIP2 monomer interacts with two adjacent KCND3 subunits, through both the N-terminal inactivation ball of a KCND3 subunit and a C-terminal helix from the adjacent KCND3 subunit, clamping them together; this interaction modulates the channel gating kinetics. Post-translationally, regulated through phosphorylation at Ser-569 by CaMK2D. In terms of tissue distribution, highly expressed in brain, in particular in the retrosplenial cortex, medial habenula, anterior thalamus, hippocampus, cerebellum and lateral geniculate and superior colliculus. Highly expressed in heart atrium (at protein level) and throughout the ventricle wall, in lung and vas deferens.

It is found in the cell membrane. The protein localises to the sarcolemma. The protein resides in the cell projection. It localises to the dendrite. The enzyme catalyses K(+)(in) = K(+)(out). In terms of biological role, pore-forming (alpha) subunit of voltage-gated A-type potassium channels that mediates transmembrane potassium transport in excitable membranes, in brain and heart. In cardiomyocytes, may generate the transient outward potassium current I(To). In neurons, may conduct the transient subthreshold somatodendritic A-type potassium current (ISA). Kinetics properties are characterized by fast activation at subthreshold membrane potentials, rapid inactivation, and quick recovery from inactivation. Channel properties are modulated by interactions with regulatory subunits. Interaction with the regulatory subunits KCNIP1 or KCNIP2 modulates the channel gating kinetics namely channel activation and inactivation kinetics and rate of recovery from inactivation. Likewise, interaction with DPP6 modulates the channel gating kinetics namely channel activation and inactivation kinetics. The sequence is that of A-type voltage-gated potassium channel KCND3 from Rattus norvegicus (Rat).